We begin with the raw amino-acid sequence, 134 residues long: Putative nickel-responsive regulator (134 aa).

Ni(2+) is bound by residues His-78, His-89, His-91, and Cys-97.

This sequence belongs to the transcriptional regulatory CopG/NikR family. It depends on Ni(2+) as a cofactor.

Transcriptional regulator. The protein is Putative nickel-responsive regulator of Chlorobium phaeobacteroides (strain DSM 266 / SMG 266 / 2430).